Here is a 268-residue protein sequence, read N- to C-terminus: Glutamate racemase (268 aa).

Residues 14 to 15 (DS) and 46 to 47 (YG) contribute to the substrate site. The active-site Proton donor/acceptor is the cysteine 78. Residue 79–80 (NT) coordinates substrate. Residue cysteine 192 is the Proton donor/acceptor of the active site. Position 193 to 194 (193 to 194 (TH)) interacts with substrate.

Belongs to the aspartate/glutamate racemases family.

The catalysed reaction is L-glutamate = D-glutamate. Its pathway is cell wall biogenesis; peptidoglycan biosynthesis. Functionally, provides the (R)-glutamate required for cell wall biosynthesis. The protein is Glutamate racemase of Sphingopyxis alaskensis (strain DSM 13593 / LMG 18877 / RB2256) (Sphingomonas alaskensis).